We begin with the raw amino-acid sequence, 113 residues long: Non-specific lipid-transfer protein 6 (113 aa).

Residues 1–19 form the signal peptide; it reads MRSLLLAVCLVLALHCGEA. Intrachain disulfides connect C23–C70, C33–C47, C48–C95, and C68–C109.

Belongs to the plant LTP family.

Functionally, plant non-specific lipid-transfer proteins transfer phospholipids as well as galactolipids across membranes. May play a role in wax or cutin deposition in the cell walls of expanding epidermal cells and certain secretory tissues. This chain is Non-specific lipid-transfer protein 6 (LTP6), found in Arabidopsis thaliana (Mouse-ear cress).